Consider the following 417-residue polypeptide: Serine hydroxymethyltransferase (417 aa).

Residues Leu-121 and 125 to 127 (GHL) contribute to the (6S)-5,6,7,8-tetrahydrofolate site. The residue at position 229 (Lys-229) is an N6-(pyridoxal phosphate)lysine. 355–357 (SPF) is a binding site for (6S)-5,6,7,8-tetrahydrofolate.

This sequence belongs to the SHMT family. Homodimer. It depends on pyridoxal 5'-phosphate as a cofactor.

It localises to the cytoplasm. The enzyme catalyses (6R)-5,10-methylene-5,6,7,8-tetrahydrofolate + glycine + H2O = (6S)-5,6,7,8-tetrahydrofolate + L-serine. The protein operates within one-carbon metabolism; tetrahydrofolate interconversion. It functions in the pathway amino-acid biosynthesis; glycine biosynthesis; glycine from L-serine: step 1/1. Catalyzes the reversible interconversion of serine and glycine with tetrahydrofolate (THF) serving as the one-carbon carrier. This reaction serves as the major source of one-carbon groups required for the biosynthesis of purines, thymidylate, methionine, and other important biomolecules. Also exhibits THF-independent aldolase activity toward beta-hydroxyamino acids, producing glycine and aldehydes, via a retro-aldol mechanism. The sequence is that of Serine hydroxymethyltransferase from Proteus mirabilis (strain HI4320).